A 1006-amino-acid chain; its full sequence is Multiple C2 domain and transmembrane region protein 9 (1006 aa).

A C2 1 domain is found at 1–108 (MSNIKLGVEV…PRSEAAPFNY (108 aa)). The segment at 135-156 (VTPSVPTPVPESPQAYSPSPRK) is disordered. 3 consecutive C2 domains span residues 251–371 (RGTE…PQWY), 411–536 (SDSS…DRWV), and 579–704 (NSSD…THAY). Ca(2+)-binding residues include D284, D290, D337, D339, and D344. Transmembrane regions (helical) follow at residues 842 to 862 (MLVT…AVIG) and 946 to 966 (ATAI…ITPF).

The protein belongs to the MCTP family. Ca(2+) serves as cofactor. Expressed in incipient leaf primordia and roots meristems. Observed in flowers.

Its subcellular location is the cell membrane. The protein resides in the cytoplasm. In terms of biological role, may function as a signaling molecule by regulating the trafficking of other regulators. The polypeptide is Multiple C2 domain and transmembrane region protein 9 (Arabidopsis thaliana (Mouse-ear cress)).